Consider the following 176-residue polypeptide: UBA-like domain-containing protein 1 (176 aa).

A disordered region spans residues 87-176 (SESFHGGGGS…RAHPAMEAER (90 aa)). The span at 120 to 137 (TPSWPTAASPPGGPQQHQ) shows a compositional bias: low complexity. A compositionally biased stretch (pro residues) spans 138–150 (PQPPLWTPAPPSP). Residues 166 to 176 (PRAHPAMEAER) show a composition bias toward basic and acidic residues.

Belongs to the UBALD family.

The protein is UBA-like domain-containing protein 1 (Ubald1) of Mus musculus (Mouse).